The primary structure comprises 217 residues: Formate dehydrogenase, nitrate-inducible, cytochrome b556(Fdn) subunit (217 aa).

The Cytoplasmic portion of the chain corresponds to 1 to 11 (MSKSKMIVRTK). A helical transmembrane segment spans residues 12-36 (FIDRACHWTVVICFFLVALSGISFF). Residue His18 participates in heme b binding. The Periplasmic segment spans residues 37–52 (FPTLQWLTQTFGTPQM). Residues 53–74 (GRILHPFFGIAIFVALMFMFVR) form a helical membrane-spanning segment. Residue His57 participates in heme b binding. Topologically, residues 75-110 (FVHHNIPDKKDIPWLLNIVEVLKGNEHKVADVGKYN) are cytoplasmic. Residues 111-134 (AGQKMMFWSIMSMIFVLLVTGVII) traverse the membrane as a helical segment. The Periplasmic segment spans residues 135–150 (WRPYFAQYFPMQVVRY). Residues 151–175 (SLLIHAAAGIILIHAILIHMYMAFW) form a helical membrane-spanning segment. Heme b-binding residues include His155 and His169. A menaquinone is bound at residue His169. Residues 176–217 (VKGSIKGMIEGKVSRRWAKKHHPRWYREIEKAEAKKESEEGI) are Cytoplasmic-facing.

It belongs to the formate dehydrogenase gamma subunit family. In terms of assembly, trimer of heterotrimers, consisting of subunits alpha, beta and gamma. Requires heme as cofactor.

Its subcellular location is the cell inner membrane. Formate dehydrogenase allows the bacterium to use formate as major electron donor during anaerobic respiration, when nitrate is used as electron acceptor. Subunit gamma is the cytochrome b556 component of the formate dehydrogenase-N, and also contains a menaquinone reduction site that receives electrons from the beta subunit (FdnH), through its hemes. Formate dehydrogenase-N is part of a system that generates proton motive force, together with the dissimilatory nitrate reductase (Nar). In Escherichia coli O157:H7, this protein is Formate dehydrogenase, nitrate-inducible, cytochrome b556(Fdn) subunit (fdnI).